A 359-amino-acid polypeptide reads, in one-letter code: Anhydro-N-acetylmuramic acid kinase (359 aa).

ATP is bound at residue 12–19 (GTSLDGVD).

This sequence belongs to the anhydro-N-acetylmuramic acid kinase family.

The enzyme catalyses 1,6-anhydro-N-acetyl-beta-muramate + ATP + H2O = N-acetyl-D-muramate 6-phosphate + ADP + H(+). The protein operates within amino-sugar metabolism; 1,6-anhydro-N-acetylmuramate degradation. It participates in cell wall biogenesis; peptidoglycan recycling. Catalyzes the specific phosphorylation of 1,6-anhydro-N-acetylmuramic acid (anhMurNAc) with the simultaneous cleavage of the 1,6-anhydro ring, generating MurNAc-6-P. Is required for the utilization of anhMurNAc either imported from the medium or derived from its own cell wall murein, and thus plays a role in cell wall recycling. This Sulfurovum sp. (strain NBC37-1) protein is Anhydro-N-acetylmuramic acid kinase.